The chain runs to 982 residues: Polyribonucleotide nucleotidyltransferase 2, mitochondrial (982 aa).

The N-terminal 39 residues, 1–39, are a transit peptide targeting the mitochondrion; that stretch reads MSMAVASLRLLARGGRRRARFPAPLSVPGGRAAFLSGAA. The region spanning 624-678 is the KH domain; sequence PRLATLSFSSDSLRKLLFHRKKIEQETGARVSVSDGTVTIVAKTQPIMDKAIEKV. An S1 motif 1 domain is found at 689 to 757; it reads GRTYKGVVSS…LRGNIKLSLK (69 aa). Disordered stretches follow at residues 792-814 and 832-892; these read PSKD…EETP and QDVT…NDVL. Composition is skewed to low complexity over residues 846–855 and 868–877; these read AKSSPKLSKP and KKTSGASTTA. An S1 motif 2 domain is found at 920-982; it reads GDVVTAKVYQ…KGIPVFSLLD (63 aa).

The protein belongs to the polyribonucleotide nucleotidyltransferase family.

The protein resides in the mitochondrion. The enzyme catalyses RNA(n+1) + phosphate = RNA(n) + a ribonucleoside 5'-diphosphate. Involved in the 3'-end maturation of mitochondrial mRNAs, rRNAs and tRNAs. Functions as a poly(A) mRNA 3'-5' degrading phosphorylase. The polypeptide is Polyribonucleotide nucleotidyltransferase 2, mitochondrial (PNP2) (Oryza sativa subsp. japonica (Rice)).